The sequence spans 464 residues: Probable pectin lyase F (464 aa).

Positions 1-20 (MAIIRSVIAATALLGAAVNA) are cleaved as a signal peptide. An intrachain disulfide couples Cys-80 to Cys-103. Residue Asn-126 is glycosylated (N-linked (GlcNAc...) asparagine). Arg-252 is a catalytic residue. A disulfide bridge links Cys-319 with Cys-327. The interval 424-464 (EHEVSTPAVPTPTPVPSSVGSHGSTAGSSHPPAFSRTSFES) is disordered. The segment covering 439 to 448 (PSSVGSHGST) has biased composition (low complexity).

It belongs to the polysaccharide lyase 1 family.

The protein localises to the secreted. It catalyses the reaction Eliminative cleavage of (1-&gt;4)-alpha-D-galacturonan methyl ester to give oligosaccharides with 4-deoxy-6-O-methyl-alpha-D-galact-4-enuronosyl groups at their non-reducing ends.. In terms of biological role, pectinolytic enzymes consist of four classes of enzymes: pectin lyase, polygalacturonase, pectin methylesterase and rhamnogalacturonase. Among pectinolytic enzymes, pectin lyase is the most important in depolymerization of pectin, since it cleaves internal glycosidic bonds of highly methylated pectins. In Emericella nidulans (strain FGSC A4 / ATCC 38163 / CBS 112.46 / NRRL 194 / M139) (Aspergillus nidulans), this protein is Probable pectin lyase F (pelF).